The sequence spans 254 residues: Photosystem II 22 kDa protein 2, chloroplastic (254 aa).

The N-terminal 38 residues, 1 to 38 (MALQQSMAMPMMVVSGLGTAPRSSPMVQLQRMKKHLVV), are a transit peptide targeting the chloroplast. 2 tandem repeats follow at residues 42–148 (FKSR…FVDD) and 149–253 (ATGL…DNDD). 4 helical membrane passes run 86-106 (VAML…KGIL), 120-140 (AEPL…GALG), 184-204 (LFVG…EIIT), and 219-239 (PINE…FAAI).

Belongs to the ELIP/psbS family.

The protein resides in the plastid. It localises to the chloroplast thylakoid membrane. Involved in high light-mediated energy-dependent nonphotochemical quenching (NPQ, qE) and thermal dissipation (TD) thus regulating energy conversion in photosystem II and protecting from photoinhibition. Also seems to regulate quantum yield of electron transport in fluctuating light conditions. This is Photosystem II 22 kDa protein 2, chloroplastic from Oryza sativa subsp. indica (Rice).